The chain runs to 653 residues: Probable sulfate transporter 3.4 (653 aa).

The Cytoplasmic portion of the chain corresponds to 1 to 92; it reads MGHGTNRVED…QYDLKLLRSD (92 aa). Residues 93 to 113 form a helical membrane-spanning segment; the sequence is VISGLTIASLAIPQGISYAKL. The Extracellular portion of the chain corresponds to 114-115; that stretch reads AN. The chain crosses the membrane as a helical span at residues 116-136; the sequence is LPPIVGLYSSFVPPLIYAVLG. The Cytoplasmic portion of the chain corresponds to 137 to 140; sequence SSRH. The helical transmembrane segment at 141–161 threads the bilayer; that stretch reads LAVGPVSIASLVMGSMLSESV. The Extracellular segment spans residues 162-167; the sequence is SPTQDS. The chain crosses the membrane as a helical span at residues 168–188; sequence ILYLKLAFTSTFFAGVFQASL. Over 189–194 the chain is Cytoplasmic; sequence GLLRLG. The helical transmembrane segment at 195–215 threads the bilayer; sequence FMIDFLSKATLIGFTAGAAVI. The Extracellular segment spans residues 216 to 247; sequence VSLQQLKGLLGIVHFTGKMQIVPVMSSVFNHR. The helical transmembrane segment at 248-268 threads the bilayer; it reads SEWSWETIVMGIGFLSILLTT. The Cytoplasmic portion of the chain corresponds to 269–279; that stretch reads RHISMRKPKLF. The helical transmembrane segment at 280 to 300 threads the bilayer; sequence WISAASPLASVIISTLLVYLI. At 301-331 the chain is on the extracellular side; sequence RSKTHAISFIGHLPKGLNPPSLNMLYFSGAH. Residues 332–352 form a helical membrane-spanning segment; sequence LALAIKTGIITGILSLTEGIA. Residues 353–370 lie on the Cytoplasmic side of the membrane; sequence VGRTFASLKNYQVNGNKE. A helical transmembrane segment spans residues 371-391; sequence MMAIGFMNMAGSCTSCYVTTG. Residues 392-407 lie on the Extracellular side of the membrane; that stretch reads SFSRSAVNYNAGAKTA. The helical transmembrane segment at 408–428 threads the bilayer; that stretch reads VSNIVMASAVLVTLLFLMPLF. At 429-433 the chain is on the cytoplasmic side; sequence YYTPN. A helical membrane pass occupies residues 434–454; it reads VILAAIILTAVIGLIDYQAAY. At 455 to 471 the chain is on the extracellular side; it reads KLWKVDKFDFFTCLCSF. Residues 472–492 form a helical membrane-spanning segment; the sequence is FGVLFVSVPLGLAIAVAVSVI. Over 493–653 the chain is Cytoplasmic; sequence KILLHVTRPN…SSTWKANGQP (161 aa). The region spanning 520 to 643 is the STAS domain; that stretch reads RYREASRIPG…LTVGEAVADL (124 aa).

This sequence belongs to the SLC26A/SulP transporter (TC 2.A.53) family.

Its subcellular location is the membrane. Its function is as follows. H(+)/sulfate cotransporter that may play a role in the regulation of sulfate assimilation. The chain is Probable sulfate transporter 3.4 (SULTR3;4) from Arabidopsis thaliana (Mouse-ear cress).